Here is a 288-residue protein sequence, read N- to C-terminus: ATP synthase gamma chain (288 aa).

The protein belongs to the ATPase gamma chain family. F-type ATPases have 2 components, CF(1) - the catalytic core - and CF(0) - the membrane proton channel. CF(1) has five subunits: alpha(3), beta(3), gamma(1), delta(1), epsilon(1). CF(0) has three main subunits: a, b and c.

It is found in the cell inner membrane. Functionally, produces ATP from ADP in the presence of a proton gradient across the membrane. The gamma chain is believed to be important in regulating ATPase activity and the flow of protons through the CF(0) complex. In Aliivibrio fischeri (strain ATCC 700601 / ES114) (Vibrio fischeri), this protein is ATP synthase gamma chain.